Reading from the N-terminus, the 156-residue chain is 2-C-methyl-D-erythritol 2,4-cyclodiphosphate synthase (156 aa).

D9 and H11 together coordinate a divalent metal cation. 4-CDP-2-C-methyl-D-erythritol 2-phosphate-binding positions include 9–11 (DAH) and 36–37 (HS). H44 contributes to the a divalent metal cation binding site. A 4-CDP-2-C-methyl-D-erythritol 2-phosphate-binding site is contributed by 58-60 (NIG).

Belongs to the IspF family. As to quaternary structure, homotrimer. The cofactor is a divalent metal cation.

The catalysed reaction is 4-CDP-2-C-methyl-D-erythritol 2-phosphate = 2-C-methyl-D-erythritol 2,4-cyclic diphosphate + CMP. Its pathway is isoprenoid biosynthesis; isopentenyl diphosphate biosynthesis via DXP pathway; isopentenyl diphosphate from 1-deoxy-D-xylulose 5-phosphate: step 4/6. In terms of biological role, involved in the biosynthesis of isopentenyl diphosphate (IPP) and dimethylallyl diphosphate (DMAPP), two major building blocks of isoprenoid compounds. Catalyzes the conversion of 4-diphosphocytidyl-2-C-methyl-D-erythritol 2-phosphate (CDP-ME2P) to 2-C-methyl-D-erythritol 2,4-cyclodiphosphate (ME-CPP) with a corresponding release of cytidine 5-monophosphate (CMP). This chain is 2-C-methyl-D-erythritol 2,4-cyclodiphosphate synthase, found in Kosmotoga olearia (strain ATCC BAA-1733 / DSM 21960 / TBF 19.5.1).